The following is a 351-amino-acid chain: Photosystem II D2 protein (351 aa).

The helical transmembrane segment at 39–59 (TAYLAAGGWMTGTTFVTSWYT) threads the bilayer. Histidine 116 contributes to the chlorophyll a binding site. Residues 123–139 (GFCLRQFEIARLVGIRP) form a helical membrane-spanning segment. Positions 128 and 141 each coordinate pheophytin a. Residues 151–164 (VFVSVFLLYPLGQA) traverse the membrane as a helical segment. Histidine 196 contacts chlorophyll a. Residues 206–226 (GALLCAIHGATVENTLFEDGD) traverse the membrane as a helical segment. 2 residues coordinate a plastoquinone: histidine 213 and phenylalanine 260. Histidine 213 lines the Fe cation pocket. Position 267 (histidine 267) interacts with Fe cation. Residues 277-293 (GLWTSAIGIVGLALNLR) traverse the membrane as a helical segment.

It belongs to the reaction center PufL/M/PsbA/D family. PSII is composed of 1 copy each of membrane proteins PsbA, PsbB, PsbC, PsbD, PsbE, PsbF, PsbH, PsbI, PsbJ, PsbK, PsbL, PsbM, PsbT, PsbX, PsbY, PsbZ, Psb30/Ycf12, at least 3 peripheral proteins of the oxygen-evolving complex and a large number of cofactors. It forms dimeric complexes. The D1/D2 heterodimer binds P680, chlorophylls that are the primary electron donor of PSII, and subsequent electron acceptors. It shares a non-heme iron and each subunit binds pheophytin, quinone, additional chlorophylls, carotenoids and lipids. There is also a Cl(-1) ion associated with D1 and D2, which is required for oxygen evolution. The PSII complex binds additional chlorophylls, carotenoids and specific lipids. serves as cofactor.

The protein localises to the plastid. It is found in the chloroplast thylakoid membrane. It carries out the reaction 2 a plastoquinone + 4 hnu + 2 H2O = 2 a plastoquinol + O2. Photosystem II (PSII) is a light-driven water:plastoquinone oxidoreductase that uses light energy to abstract electrons from H(2)O, generating O(2) and a proton gradient subsequently used for ATP formation. It consists of a core antenna complex that captures photons, and an electron transfer chain that converts photonic excitation into a charge separation. The D1/D2 (PsbA/PsbD) reaction center heterodimer binds P680, the primary electron donor of PSII as well as several subsequent electron acceptors. D2 is needed for assembly of a stable PSII complex. In Trieres chinensis (Marine centric diatom), this protein is Photosystem II D2 protein.